The following is a 354-amino-acid chain: S-adenosylmethionine:tRNA ribosyltransferase-isomerase (354 aa).

It belongs to the QueA family. In terms of assembly, monomer.

The protein localises to the cytoplasm. It carries out the reaction 7-aminomethyl-7-carbaguanosine(34) in tRNA + S-adenosyl-L-methionine = epoxyqueuosine(34) in tRNA + adenine + L-methionine + 2 H(+). Its pathway is tRNA modification; tRNA-queuosine biosynthesis. Transfers and isomerizes the ribose moiety from AdoMet to the 7-aminomethyl group of 7-deazaguanine (preQ1-tRNA) to give epoxyqueuosine (oQ-tRNA). This chain is S-adenosylmethionine:tRNA ribosyltransferase-isomerase, found in Dichelobacter nodosus (strain VCS1703A).